A 270-amino-acid polypeptide reads, in one-letter code: Electron transfer flavoprotein subunit beta (270 aa).

This sequence belongs to the ETF alpha-subunit/FixB family. Heterodimer of an alpha and a beta subunit. FAD serves as cofactor.

The electron transfer flavoprotein serves as a specific electron acceptor for other dehydrogenases. It transfers the electrons to the main respiratory chain via ETF-ubiquinone oxidoreductase (ETF dehydrogenase). The chain is Electron transfer flavoprotein subunit beta (etfB) from Megasphaera elsdenii.